The primary structure comprises 374 residues: Methylthioribose-1-phosphate isomerase (374 aa).

Asp251 serves as the catalytic Proton donor.

This sequence belongs to the eIF-2B alpha/beta/delta subunits family. MtnA subfamily.

The protein resides in the cytoplasm. It localises to the nucleus. The enzyme catalyses 5-(methylsulfanyl)-alpha-D-ribose 1-phosphate = 5-(methylsulfanyl)-D-ribulose 1-phosphate. It functions in the pathway amino-acid biosynthesis; L-methionine biosynthesis via salvage pathway; L-methionine from S-methyl-5-thio-alpha-D-ribose 1-phosphate: step 1/6. Its function is as follows. Catalyzes the interconversion of methylthioribose-1-phosphate (MTR-1-P) into methylthioribulose-1-phosphate (MTRu-1-P). This is Methylthioribose-1-phosphate isomerase (IDI2) from Oryza sativa subsp. japonica (Rice).